Consider the following 707-residue polypeptide: Transcription factor 12 (707 aa).

The segment at 25 to 109 (AMFSPPVNSG…TPFMNSNLIG (85 aa)) is disordered. Polar residues-rich tracts occupy residues 30–48 (PVNSGKTRPTTLGSSQFSG) and 56–76 (GTTSWGTSGQPSPSYDSSRGF). S47, S67, and S79 each carry phosphoserine. Basic and acidic residues predominate over residues 81-93 (HYSDHLNDSRLGT). S98 is modified (phosphoserine). A Glycyl lysine isopeptide (Lys-Gly) (interchain with G-Cter in SUMO2) cross-link involves residue K110. A phosphoserine mark is found at S116 and S124. The leucine-zipper stretch occupies residues 119 to 140 (LYSRDSGLSGCQSSLLRQDLGL). Disordered stretches follow at residues 140-222 (LGSP…SMFA) and 249-313 (FGGI…ASHT). Polar residues predominate over residues 144–163 (AQLSSSGKPGTPYYSFSATS). K181 is covalently cross-linked (Glycyl lysine isopeptide (Lys-Gly) (interchain with G-Cter in SUMO2)). Positions 256–269 (STSHMSQSSSYGSL) are enriched in low complexity. Polar residues predominate over residues 282-306 (VSPTDINTSLPPMSSFHRGSTSSSP). T313 carries the post-translational modification Phosphothreonine. S333 carries the phosphoserine modification. Disordered regions lie at residues 349–393 (PDHT…YENS) and 521–605 (HKTP…ERRM). Low complexity predominate over residues 352–363 (TSSSFPSNPSTP). 2 stretches are compositionally biased toward polar residues: residues 364 to 377 (VGSPSPLTAGTSQW) and 384 to 393 (APSSPSYENS). Basic and acidic residues-rich tracts occupy residues 543–555 (IKTENKEKDENLH) and 561–576 (DDMKSDDESSQKDIKV). A Glycyl lysine isopeptide (Lys-Gly) (interchain with G-Cter in SUMO2) cross-link involves residue K544. A Phosphoserine modification is found at S565. A Glycyl lysine isopeptide (Lys-Gly) (interchain with G-Cter in SUMO2) cross-link involves residue K575. T582 is modified (phosphothreonine). Residues S583 and S584 each carry the phosphoserine modification. A compositionally biased stretch (basic and acidic residues) spans 593–605 (PEQKIEREKERRM). Residues 602 to 655 (ERRMANNARERLRVRDINEAFKELGRMCQLHLKSEKPQTKLLILHQAVAVILSL) form the bHLH domain. Residues K634 and K678 each participate in a glycyl lysine isopeptide (Lys-Gly) (interchain with G-Cter in SUMO2) cross-link. Positions 657–680 (QQVRERNLNPKAACLKRREEEKVS) are class A specific domain. The tract at residues 675-707 (EEEKVSAASAEPPTTLPGTHPGLSETTNPMGHL) is disordered. A compositionally biased stretch (low complexity) spans 686–697 (PPTTLPGTHPGL). Polar residues predominate over residues 698-707 (SETTNPMGHL).

Efficient DNA binding requires dimerization with another bHLH protein. Forms homo- or heterooligomers with myogenin, E12 and ITF2 proteins. Interacts with PTF1. Interacts with RUNX1T1. Interacts with NEUROD2. Interacts with BHLHA9. In terms of tissue distribution, isoform gamma is highly expressed in lung, kidney, spleen, and is expressed at reduced levels in heart, muscle, liver, pituitary, brain and the trigeminal ganglion. The expression of isoform alpha predominates over isoform gamma in the pituitary and the brain.

The protein resides in the nucleus. Transcriptional regulator. Involved in the initiation of neuronal differentiation. Activates transcription by binding to the E box (5'-CANNTG-3'). May be involved in the functional network that regulates the development of the GnRH axis. This chain is Transcription factor 12 (Tcf12), found in Rattus norvegicus (Rat).